The chain runs to 513 residues: Maturase K (513 aa).

It belongs to the intron maturase 2 family. MatK subfamily.

It is found in the plastid. It localises to the chloroplast. Usually encoded in the trnK tRNA gene intron. Probably assists in splicing its own and other chloroplast group II introns. In Eleusine indica (Goosegrass), this protein is Maturase K.